Reading from the N-terminus, the 507-residue chain is Probable bifunctional methylthioribulose-1-phosphate dehydratase/enolase-phosphatase E1 (507 aa).

Position 2 is an N-acetylalanine (Ala2). The methylthioribulose-1-phosphate dehydratase stretch occupies residues 2-237 (AVAAAAMIGL…AIKLHQLGLD (236 aa)). Residue Cys109 participates in substrate binding. His127 and His129 together coordinate Zn(2+). Glu152 functions as the Proton donor/acceptor in the catalytic mechanism. A Zn(2+)-binding site is contributed by His202. Positions 268 to 507 (IVLDIEGTTT…FKTVTSFSQI (240 aa)) are enolase-phosphatase E1. Asp271 and Glu273 together coordinate Mg(2+). Substrate is bound by residues 406–407 (SS) and Lys440. Mg(2+) is bound at residue Asp466.

In the N-terminal section; belongs to the aldolase class II family. MtnB subfamily. It in the C-terminal section; belongs to the HAD-like hydrolase superfamily. MasA/MtnC family. Requires Zn(2+) as cofactor. The cofactor is Mg(2+).

It catalyses the reaction 5-(methylsulfanyl)-D-ribulose 1-phosphate = 5-methylsulfanyl-2,3-dioxopentyl phosphate + H2O. It carries out the reaction 5-methylsulfanyl-2,3-dioxopentyl phosphate + H2O = 1,2-dihydroxy-5-(methylsulfanyl)pent-1-en-3-one + phosphate. It functions in the pathway amino-acid biosynthesis; L-methionine biosynthesis via salvage pathway; L-methionine from S-methyl-5-thio-alpha-D-ribose 1-phosphate: step 2/6. The protein operates within amino-acid biosynthesis; L-methionine biosynthesis via salvage pathway; L-methionine from S-methyl-5-thio-alpha-D-ribose 1-phosphate: step 3/6. Its pathway is amino-acid biosynthesis; L-methionine biosynthesis via salvage pathway; L-methionine from S-methyl-5-thio-alpha-D-ribose 1-phosphate: step 4/6. In Arabidopsis thaliana (Mouse-ear cress), this protein is Probable bifunctional methylthioribulose-1-phosphate dehydratase/enolase-phosphatase E1.